The sequence spans 237 residues: MSQPIYKRILLKLSGEALQGEDGLGIDPAILDRMAVEIKELVEMGVEVGVVLGGGNLFRGAKLAKAGMNRVVGDHMGMLATVMNGLAMRDSLFRADVNAKLMSAFQLNGICDTYNWSEAIKMLREKRVVIFSAGTGNPFFTTDSTACLRGIEIEADVVLKATKVDGVYDCDPAKNPDAKLYKNLTYAEVIDKELQVMDLSAFTLARDHGMPIRVFNMGKPGALRQVVTGTEEGTTIC.

Lys-12 to Gly-15 lines the ATP pocket. The segment at Gly-20–Gly-25 is involved in allosteric activation by GTP. Residue Gly-54 participates in UMP binding. ATP is bound by residues Gly-55 and Arg-59. Residues Asp-74 and Thr-135 to Thr-142 each bind UMP. Thr-162, Tyr-168, and Asp-171 together coordinate ATP.

Belongs to the UMP kinase family. In terms of assembly, homohexamer.

Its subcellular location is the cytoplasm. The catalysed reaction is UMP + ATP = UDP + ADP. It participates in pyrimidine metabolism; CTP biosynthesis via de novo pathway; UDP from UMP (UMPK route): step 1/1. Allosterically activated by GTP. Inhibited by UTP. In terms of biological role, catalyzes the reversible phosphorylation of UMP to UDP. This is Uridylate kinase from Haemophilus influenzae (strain PittGG).